The sequence spans 172 residues: Photosystem I assembly protein Ycf3 (172 aa).

3 TPR repeats span residues 35-70, 74-107, and 122-155; these read AFTY…EIDP, SYIL…NPFL, and GERA…TPGN.

This sequence belongs to the Ycf3 family.

It localises to the plastid. The protein resides in the chloroplast thylakoid membrane. Essential for the assembly of the photosystem I (PSI) complex. May act as a chaperone-like factor to guide the assembly of the PSI subunits. This Dioscorea elephantipes (Elephant's foot yam) protein is Photosystem I assembly protein Ycf3.